An 841-amino-acid chain; its full sequence is Translation initiation factor IF-2 (841 aa).

One can recognise a tr-type G domain in the interval 341–508 (NRAPVVTIMG…AILLQAEILE (168 aa)). The interval 350-357 (GHVDHGKT) is G1. A GTP-binding site is contributed by 350-357 (GHVDHGKT). The segment at 375-379 (GITQC) is G2. The G3 stretch occupies residues 396–399 (DTPG). GTP is bound by residues 396 to 400 (DTPGH) and 450 to 453 (NKID). Residues 450-453 (NKID) are G4. Residues 486–488 (SAK) form a G5 region.

Belongs to the TRAFAC class translation factor GTPase superfamily. Classic translation factor GTPase family. IF-2 subfamily.

The protein localises to the cytoplasm. Functionally, one of the essential components for the initiation of protein synthesis. Protects formylmethionyl-tRNA from spontaneous hydrolysis and promotes its binding to the 30S ribosomal subunits. Also involved in the hydrolysis of GTP during the formation of the 70S ribosomal complex. This chain is Translation initiation factor IF-2, found in Wigglesworthia glossinidia brevipalpis.